A 189-amino-acid chain; its full sequence is Thermostable direct hemolysin (189 aa).

Positions 1-24 (MKYQYFAKKSFLFISMLAAFKTFA) are cleaved as a signal peptide. The cysteines at positions 175 and 185 are disulfide-linked.

The protein belongs to the TDH hemolysin family. As to quaternary structure, homodimer.

Functionally, bacterial hemolysins are exotoxins that attack blood cell membranes and cause cell rupture by mechanisms not clearly defined. The protein is Thermostable direct hemolysin (tdh) of Vibrio mimicus.